Reading from the N-terminus, the 91-residue chain is Small ribosomal subunit protein bS20 (91 aa).

The protein belongs to the bacterial ribosomal protein bS20 family.

Binds directly to 16S ribosomal RNA. The chain is Small ribosomal subunit protein bS20 from Caulobacter sp. (strain K31).